The following is a 312-amino-acid chain: Olfactory receptor 4F3/4F16/4F29 (312 aa).

At 1–25 (MDGENHSVVSEFLFLGLTHSWEIQL) the chain is on the extracellular side. A glycan (N-linked (GlcNAc...) asparagine) is linked at Asn5. The chain crosses the membrane as a helical span at residues 26–49 (LLLVFSSVLYVASITGNILIVFSV). Residues 50 to 57 (TTDPHLHS) are Cytoplasmic-facing. Residues 58-79 (PMYFLLASLSFIDLGACSVTSP) form a helical membrane-spanning segment. Residues 80–100 (KMIYDLFRKRKVISFGGCIAQ) are Extracellular-facing. A disulfide bridge links Cys97 with Cys189. A helical membrane pass occupies residues 101-120 (IFFIHVVGGVEMVLLIAMAF). The Cytoplasmic portion of the chain corresponds to 121-139 (DRYVALCKPLHYLTIMSPR). Residues 140-158 (MCLSFLAVAWTLGVSHSLF) form a helical membrane-spanning segment. The Extracellular segment spans residues 159 to 195 (QLAFLVNLAFCGPNVLDSFYCDLPRLLRLACTDTYRL). A helical transmembrane segment spans residues 196 to 219 (QFMVTVNSGFICVGTFFILLISYV). Residues 220 to 235 (FILFTVWKHSSGGSSK) lie on the Cytoplasmic side of the membrane. Residues 236 to 258 (ALSTLSAHSTVVLLFFGPPMFVY) form a helical membrane-spanning segment. The Extracellular portion of the chain corresponds to 259-269 (TRPHPNSQMDK). A helical membrane pass occupies residues 270–289 (FLAIFDAVLTPFLNPVVYTF). Residues 290–312 (RNKEMKAAIKRVCKQLVIYKRIS) lie on the Cytoplasmic side of the membrane.

Belongs to the G-protein coupled receptor 1 family.

It is found in the cell membrane. Odorant receptor. This is Olfactory receptor 4F3/4F16/4F29 (OR4F3) from Homo sapiens (Human).